A 340-amino-acid polypeptide reads, in one-letter code: tRNA (cytosine(34)-C(5))-methyltransferase, mitochondrial (340 aa).

S-adenosyl-L-methionine-binding positions include Cys139–Lys145, Glu162, Asp193, and Asp211. Cys265 serves as the catalytic Nucleophile.

It belongs to the class I-like SAM-binding methyltransferase superfamily. RsmB/NOP family.

Its subcellular location is the mitochondrion matrix. The enzyme catalyses cytidine(34) in mitochondrial tRNA + S-adenosyl-L-methionine = 5-methylcytidine(34) in mitochondrial tRNA + S-adenosyl-L-homocysteine + H(+). Functionally, mitochondrial tRNA methyltransferase that mediates methylation of cytosine to 5-methylcytosine (m5C) at position 34 of mt-tRNA(Met). mt-tRNA(Met) methylation at cytosine(34) takes place at the wobble position of the anticodon and initiates the formation of 5-formylcytosine (f(5)c) at this position. mt-tRNA(Met) containing the f(5)c modification at the wobble position enables recognition of the AUA codon in addition to the AUG codon, expanding codon recognition in mitochondrial translation. The sequence is that of tRNA (cytosine(34)-C(5))-methyltransferase, mitochondrial from Homo sapiens (Human).